Reading from the N-terminus, the 194-residue chain is Imidazoleglycerol-phosphate dehydratase (194 aa).

It belongs to the imidazoleglycerol-phosphate dehydratase family.

It localises to the cytoplasm. It carries out the reaction D-erythro-1-(imidazol-4-yl)glycerol 3-phosphate = 3-(imidazol-4-yl)-2-oxopropyl phosphate + H2O. It functions in the pathway amino-acid biosynthesis; L-histidine biosynthesis; L-histidine from 5-phospho-alpha-D-ribose 1-diphosphate: step 6/9. The sequence is that of Imidazoleglycerol-phosphate dehydratase from Listeria monocytogenes serovar 1/2a (strain ATCC BAA-679 / EGD-e).